Reading from the N-terminus, the 80-residue chain is Protein UL148A (80 aa).

Residues 10–30 (WIPVCVVVVMTSVVLFAGLHV) traverse the membrane as a helical segment.

It localises to the host membrane. In terms of biological role, plays a role in the down-regulation of the host NKG2D ligand MICA by utilizing the lysosomal pathway for its degradation. In turn, MICA reduction diminishes NK-cell killing of HCMV-infected cells. The polypeptide is Protein UL148A (UL148A) (Human cytomegalovirus (strain Merlin) (HHV-5)).